Here is a 442-residue protein sequence, read N- to C-terminus: Proline--tRNA ligase (442 aa).

This sequence belongs to the class-II aminoacyl-tRNA synthetase family. ProS type 2 subfamily. In terms of assembly, homodimer.

The protein resides in the cytoplasm. It carries out the reaction tRNA(Pro) + L-proline + ATP = L-prolyl-tRNA(Pro) + AMP + diphosphate. Its function is as follows. Catalyzes the attachment of proline to tRNA(Pro) in a two-step reaction: proline is first activated by ATP to form Pro-AMP and then transferred to the acceptor end of tRNA(Pro). This Brucella melitensis biotype 2 (strain ATCC 23457) protein is Proline--tRNA ligase.